Here is a 481-residue protein sequence, read N- to C-terminus: Small ribosomal subunit protein bS1 (481 aa).

4 S1 motif domains span residues 36–105, 123–188, 209–277, and 294–363; these read GDIV…LSKK, DEAV…LSRR, GAIR…LSLK, and GQIV…LSLK. The tract at residues 437–465 is disordered; it reads ATEEAGHGSSEQPPASSTPSAKATGGSLA. Residues 445–457 show a composition bias toward polar residues; sequence SSEQPPASSTPSA.

The protein belongs to the bacterial ribosomal protein bS1 family.

In terms of biological role, binds mRNA; thus facilitating recognition of the initiation point. It is needed to translate mRNA with a short Shine-Dalgarno (SD) purine-rich sequence. The sequence is that of Small ribosomal subunit protein bS1 (rpsA) from Mycobacterium leprae (strain TN).